The sequence spans 359 residues: Peroxisome assembly protein 12 (359 aa).

Over 1–24 (MSTTIRASQLASSISPKTEEKQPS) the chain is Peroxisomal matrix. A helical membrane pass occupies residues 25-52 (VFDIIAQENLATSIRPALQHLVKYLAFF). The Cytoplasmic segment spans residues 53–56 (KPKT). A helical membrane pass occupies residues 57–81 (FLSVHRNFDEYYIIFDLILQNHYLR). The Peroxisomal matrix segment spans residues 82-106 (NYGASFTENFYSMKRIASGTGNPPN). Residues 107–128 (DGRERIMSLITLVGWPYVENKL) form a helical membrane-spanning segment. Residues 129-133 (NQLYD) lie on the Cytoplasmic side of the membrane. Residues 134-184 (RLKEVYECRSWSSINGMKAKCQKMFVIIWPYIKTALKAVKSALQLAYILNR) traverse the membrane as a helical segment. Topologically, residues 185–253 (SSIHSPWLYF…ILGLPGIVSR (69 aa)) are peroxisomal matrix. A helical membrane pass occupies residues 254-281 (LFAYGLFFVQFLDYMYNTDLAKLTKTGL). At 282-359 (DGAIPSPPHK…NVQHLIRLFV (78 aa)) the chain is on the cytoplasmic side. Zn(2+)-binding residues include Cys307, Cys310, Cys328, and Cys331. The RING-type; degenerate zinc-finger motif lies at 307 to 346 (CPICLKKRVNDTALFVSGYVFCYTCINQYVNTYNKCPVTG).

This sequence belongs to the pex2/pex10/pex12 family. In terms of assembly, component of the PEX2-PEX10-PEX12 retrotranslocation channel.

The protein resides in the peroxisome membrane. It functions in the pathway protein modification; protein ubiquitination. Functionally, component of a retrotranslocation channel required for peroxisome organization by mediating export of the PEX5/prx-5 receptor from peroxisomes to the cytosol, thereby promoting PEX5/prx-5 recycling. The retrotranslocation channel is composed of PEX2/prx-2, PEX10/prx-10 and PEX12/prx-12; each subunit contributing transmembrane segments that coassemble into an open channel that specifically allows the passage of PEX5/prx-5 through the peroxisomal membrane. PEX12/prx-12 also regulates PEX5/prx-5 recycling by activating the E3 ubiquitin-protein ligase activity of PEX10/prx-10. When PEX5 recycling is compromised, PEX12/prx-12 stimulates PEX10-mediated polyubiquitination of PEX5/prx-5, leading to its subsequent degradation. The sequence is that of Peroxisome assembly protein 12 (prx-12) from Caenorhabditis elegans.